The sequence spans 160 residues: SsrA-binding protein (160 aa).

It belongs to the SmpB family.

Its subcellular location is the cytoplasm. Its function is as follows. Required for rescue of stalled ribosomes mediated by trans-translation. Binds to transfer-messenger RNA (tmRNA), required for stable association of tmRNA with ribosomes. tmRNA and SmpB together mimic tRNA shape, replacing the anticodon stem-loop with SmpB. tmRNA is encoded by the ssrA gene; the 2 termini fold to resemble tRNA(Ala) and it encodes a 'tag peptide', a short internal open reading frame. During trans-translation Ala-aminoacylated tmRNA acts like a tRNA, entering the A-site of stalled ribosomes, displacing the stalled mRNA. The ribosome then switches to translate the ORF on the tmRNA; the nascent peptide is terminated with the 'tag peptide' encoded by the tmRNA and targeted for degradation. The ribosome is freed to recommence translation, which seems to be the essential function of trans-translation. The chain is SsrA-binding protein from Klebsiella pneumoniae (strain 342).